The primary structure comprises 383 residues: Lipid-A-disaccharide synthase (383 aa).

It belongs to the LpxB family.

The enzyme catalyses a lipid X + a UDP-2-N,3-O-bis[(3R)-3-hydroxyacyl]-alpha-D-glucosamine = a lipid A disaccharide + UDP + H(+). The protein operates within bacterial outer membrane biogenesis; LPS lipid A biosynthesis. Functionally, condensation of UDP-2,3-diacylglucosamine and 2,3-diacylglucosamine-1-phosphate to form lipid A disaccharide, a precursor of lipid A, a phosphorylated glycolipid that anchors the lipopolysaccharide to the outer membrane of the cell. In Aliivibrio fischeri (strain ATCC 700601 / ES114) (Vibrio fischeri), this protein is Lipid-A-disaccharide synthase.